Here is a 746-residue protein sequence, read N- to C-terminus: Centromere protein I (746 aa).

Positions 1-24 (MATQRVTRNSQQQNRISQGSNSRQ) are disordered.

It belongs to the CENP-I/CTF3 family. In terms of assembly, component of the CENPA-CAD complex, composed of CENPI, CENPK, CENPL, CENPO, CENPP, CENPQ, CENPR and CENPS. The CENPA-CAD complex interacts with the CENPA-NAC complex, at least composed of CENPA, CENPC, CENPH, CENPM, CENPN, CENPT and CENPU. Interacts with SENP6. Post-translationally, sumoylated. Sumoylated form can be polyubiquitinated by RNF4, leading to its degradation. Desumoylation by SENP6 prevents its degradation.

The protein resides in the nucleus. Its subcellular location is the chromosome. It is found in the centromere. In terms of biological role, component of the CENPA-CAD (nucleosome distal) complex, a complex recruited to centromeres which is involved in assembly of kinetochore proteins, mitotic progression and chromosome segregation. May be involved in incorporation of newly synthesized CENPA into centromeres via its interaction with the CENPA-NAC complex. Required for the localization of CENPF, MAD1L1 and MAD2 (MAD2L1 or MAD2L2) to kinetochores. Involved in the response of gonadal tissues to follicle-stimulating hormone. This chain is Centromere protein I (Cenpi), found in Mus musculus (Mouse).